The chain runs to 208 residues: MVRGNDMLPNGHFHKKWQFHVKTWFNQPARKQRRRNARAEKAKATFPRPVAGSLKPIVRCQTVKYNTKQRLGRGFTLEELKEAGIPAKFAPTVGIAVDHRRKNRSLETLQANVQRLKTYRASLVIFPRNMKKPKAFEASAADCSAASQAKGELLPLKGTKPALELVKITADMKEGSQYGKLRIERVNARLKGMREKRAADEAAKKDDK.

Belongs to the eukaryotic ribosomal protein eL13 family.

The protein is Large ribosomal subunit protein eL13 (RPL13) of Chlamydomonas sp. (strain W80).